The sequence spans 388 residues: Xylose isomerase (388 aa).

Active-site residues include H54 and D57. The Mg(2+) site is built by E181, E217, H220, D245, D255, D257, and D287.

This sequence belongs to the xylose isomerase family. In terms of assembly, homotetramer. Mg(2+) is required as a cofactor.

The protein localises to the cytoplasm. It carries out the reaction alpha-D-xylose = alpha-D-xylulofuranose. The polypeptide is Xylose isomerase (Streptomyces thermocyaneoviolaceus).